The sequence spans 143 residues: MDKLSRPEIRQQTTQQMYDVPENILEIDVINPQTHGIGRNMFTTYEIVCRTNMPYFRLHNSSVRRRYSEFEKFHDMLERESGRVSIPPLPGKIFTQRFRDDVIEERRQGLENFLRLVAGHPLIQTHSRVLSSFLQSPEFKPTP.

The region spanning 23 to 140 (NILEIDVINP…SSFLQSPEFK (118 aa)) is the PX domain. Residues Arg-66, Ser-68, Lys-92, Arg-97, and Arg-106 each coordinate a 1,2-diacyl-sn-glycero-3-phospho-(1D-myo-inositol-3-phosphate).

Belongs to the sorting nexin family.

It localises to the cytoplasm. The protein resides in the golgi apparatus membrane. Its subcellular location is the prevacuolar compartment membrane. Its function is as follows. Required for retention of late Golgi membrane proteins. Component of the retrieval machinery that functions by direct interaction with the cytosolic tails of certain TGN membrane proteins during the sorting/budding process at the prevacuolar compartment. Binds phosphatidylinositol 3-phosphate (PtdIns(P3)). This is Sorting nexin-3 (snx3) from Schizosaccharomyces pombe (strain 972 / ATCC 24843) (Fission yeast).